The chain runs to 375 residues: Probable G-protein coupled receptor 27 (375 aa).

The Extracellular portion of the chain corresponds to 1–23 (MANASEPGGSGGGEAAALGLKLA). The N-linked (GlcNAc...) asparagine glycan is linked to asparagine 3. A helical membrane pass occupies residues 24-44 (TLSLLLCVSLAGNVLFALLIV). The Cytoplasmic segment spans residues 45 to 55 (RERSLHRAPYY). Residues 56–76 (LLLDLCLADGLRALACLPAVM) form a helical membrane-spanning segment. Residues 77–97 (LAARRAAAAAGAPPGALGCKL) are Extracellular-facing. Cysteine 95 and cysteine 171 are joined by a disulfide. The helical transmembrane segment at 98–118 (LAFLAALFCFHAAFLLLGVGV) threads the bilayer. At 119-139 (TRYLAIAHHRFYAERLAGWPC) the chain is on the cytoplasmic side. The helical transmembrane segment at 140–160 (AAMLVCAAWALALAAAFPPVL) threads the bilayer. Residues 161–181 (DGGGDDEDAPCALEQRPDGAP) are Extracellular-facing. The chain crosses the membrane as a helical span at residues 182–202 (GALGFLLLLAVVVGATHLVYL). The Cytoplasmic segment spans residues 203-285 (RLLFFIHDRR…FKTEKRLCKM (83 aa)). Residues 286–306 (FYAVTLLFLLLWGPYVVASYL) traverse the membrane as a helical segment. Over 307–320 (RVLVRPGAVPQAYL) the chain is Extracellular. Residues 321–341 (TASVWLTFAQAGINPVVCFLF) traverse the membrane as a helical segment. At 342 to 375 (NRELRDCFRAQFPCCQSPRTTQATHPCDLKGIGL) the chain is on the cytoplasmic side.

The protein belongs to the G-protein coupled receptor 1 family. As to expression, highly expressed as a 3.0 kb transcript in brain, ovary, testis, heart, prostate and peripheral Leukocytes. Lower levels in pancreas and small intestine. A 2.3 kb transcript was also found in peripheral Leukocytes. In brain regions, detected as a 3.0 kb transcript in all regions tested. Highest levels in the caudate nucleus, putamen, hippocampus and subthalamic nucleus. Lowest level in the cerebellum.

The protein resides in the cell membrane. Functionally, orphan receptor. Possible candidate for amine-like G-protein coupled receptor. The protein is Probable G-protein coupled receptor 27 (GPR27) of Homo sapiens (Human).